A 343-amino-acid polypeptide reads, in one-letter code: Anthranilate phosphoribosyltransferase (343 aa).

Residues Gly86, 89 to 90 (GD), Thr94, 96 to 99 (NIST), 114 to 122 (KHGNRSASG), and Ser126 each bind 5-phospho-alpha-D-ribose 1-diphosphate. Gly86 contacts anthranilate. Ser98 lines the Mg(2+) pocket. Residue Asn117 coordinates anthranilate. Arg172 contacts anthranilate. Asp231 and Glu232 together coordinate Mg(2+).

Belongs to the anthranilate phosphoribosyltransferase family. Homodimer. Requires Mg(2+) as cofactor.

The catalysed reaction is N-(5-phospho-beta-D-ribosyl)anthranilate + diphosphate = 5-phospho-alpha-D-ribose 1-diphosphate + anthranilate. It functions in the pathway amino-acid biosynthesis; L-tryptophan biosynthesis; L-tryptophan from chorismate: step 2/5. Its function is as follows. Catalyzes the transfer of the phosphoribosyl group of 5-phosphorylribose-1-pyrophosphate (PRPP) to anthranilate to yield N-(5'-phosphoribosyl)-anthranilate (PRA). The polypeptide is Anthranilate phosphoribosyltransferase (Synechococcus sp. (strain JA-2-3B'a(2-13)) (Cyanobacteria bacterium Yellowstone B-Prime)).